The chain runs to 345 residues: Selenide, water dikinase (345 aa).

Residue cysteine 15 is part of the active site. ATP-binding positions include lysine 18 and 46 to 48; that span reads SKD. Aspartate 49 is a binding site for Mg(2+). Residues aspartate 66, aspartate 89, and 137-139 each bind ATP; that span reads GHS. Aspartate 89 is a Mg(2+) binding site. Aspartate 225 is a Mg(2+) binding site.

This sequence belongs to the selenophosphate synthase 1 family. Class I subfamily. Homodimer. It depends on Mg(2+) as a cofactor.

The enzyme catalyses hydrogenselenide + ATP + H2O = selenophosphate + AMP + phosphate + 2 H(+). Synthesizes selenophosphate from selenide and ATP. The sequence is that of Selenide, water dikinase from Aeromonas hydrophila subsp. hydrophila (strain ATCC 7966 / DSM 30187 / BCRC 13018 / CCUG 14551 / JCM 1027 / KCTC 2358 / NCIMB 9240 / NCTC 8049).